The sequence spans 254 residues: Phosphoribosylaminoimidazole-succinocarboxamide synthase (254 aa).

Belongs to the SAICAR synthetase family.

The enzyme catalyses 5-amino-1-(5-phospho-D-ribosyl)imidazole-4-carboxylate + L-aspartate + ATP = (2S)-2-[5-amino-1-(5-phospho-beta-D-ribosyl)imidazole-4-carboxamido]succinate + ADP + phosphate + 2 H(+). It participates in purine metabolism; IMP biosynthesis via de novo pathway; 5-amino-1-(5-phospho-D-ribosyl)imidazole-4-carboxamide from 5-amino-1-(5-phospho-D-ribosyl)imidazole-4-carboxylate: step 1/2. In Bartonella quintana (strain Toulouse) (Rochalimaea quintana), this protein is Phosphoribosylaminoimidazole-succinocarboxamide synthase.